We begin with the raw amino-acid sequence, 460 residues long: MKLWGGRFQKTTDSLVEDFHSSISFDQRLYKQDIRGSIAHATMLGKVGIISLEEAAQIVTGLKQILEEIEAGKVEFDVAAEDIHMNVEQLLTAKIGAVGKKLHTARSRNDQVAVDIRMYLKDEIIEIRALLKELVETLLNLAEQHTNTVMPGYTHMQRAQPITFAHHLMAYSQMFMRDMGRLTDCYKRTDVMPLGSGALAGTTFPLDREYTAELLGFAAVSDNSLDAVSDRDFAVEFCAAASLIMMHLSRFCEEIILWATGEFAFIDLDDAYSTGSSIMPQKKNPDVAELIRGKTGRVYGDLMGLLTMLKGLPMAYNKDMQEDKEALFDAMDTVKGCLMVFRPMLATMTVRQENMAKAARGGFTNATDVADYLAKKGVPFREAHEVVGKAVFYCLQQNKALEELTLEEYKELSPVFEDDIYAAIGVEYCVAARKVRGGPAPEAVQQAITRTKERLKQLGE.

It belongs to the lyase 1 family. Argininosuccinate lyase subfamily.

The protein localises to the cytoplasm. It catalyses the reaction 2-(N(omega)-L-arginino)succinate = fumarate + L-arginine. It functions in the pathway amino-acid biosynthesis; L-arginine biosynthesis; L-arginine from L-ornithine and carbamoyl phosphate: step 3/3. The chain is Argininosuccinate lyase from Desulforamulus reducens (strain ATCC BAA-1160 / DSM 100696 / MI-1) (Desulfotomaculum reducens).